The primary structure comprises 127 residues: Large ribosomal subunit protein bL12 (127 aa).

N6-methyllysine occurs at positions 77 and 88.

Belongs to the bacterial ribosomal protein bL12 family. In terms of assembly, homodimer. Part of the ribosomal stalk of the 50S ribosomal subunit. Forms a multimeric L10(L12)X complex, where L10 forms an elongated spine to which 2 to 4 L12 dimers bind in a sequential fashion. Binds GTP-bound translation factors.

In terms of biological role, forms part of the ribosomal stalk which helps the ribosome interact with GTP-bound translation factors. Is thus essential for accurate translation. This is Large ribosomal subunit protein bL12 from Nitratidesulfovibrio vulgaris (strain DSM 19637 / Miyazaki F) (Desulfovibrio vulgaris).